We begin with the raw amino-acid sequence, 177 residues long: Coatomer subunit zeta-1 (177 aa).

An N-acetylmethionine modification is found at methionine 1.

It belongs to the adaptor complexes small subunit family. Oligomeric complex that consists of at least the alpha, beta, beta', gamma, delta, epsilon and zeta subunits.

It is found in the cytoplasm. The protein resides in the golgi apparatus membrane. Its subcellular location is the cytoplasmic vesicle. It localises to the COPI-coated vesicle membrane. Its function is as follows. The coatomer is a cytosolic protein complex that binds to dilysine motifs and reversibly associates with Golgi non-clathrin-coated vesicles, which further mediate biosynthetic protein transport from the ER, via the Golgi up to the trans Golgi network. Coatomer complex is required for budding from Golgi membranes, and is essential for the retrograde Golgi-to-ER transport of dilysine-tagged proteins. The zeta subunit may be involved in regulating the coat assembly and, hence, the rate of biosynthetic protein transport due to its association-dissociation properties with the coatomer complex. The polypeptide is Coatomer subunit zeta-1 (COPZ1) (Bos taurus (Bovine)).